The primary structure comprises 154 residues: Large ribosomal subunit protein uL30 (154 aa).

This sequence belongs to the universal ribosomal protein uL30 family. As to quaternary structure, part of the 50S ribosomal subunit.

The protein is Large ribosomal subunit protein uL30 of Methanococcus maripaludis (strain C5 / ATCC BAA-1333).